Consider the following 845-residue polypeptide: Protein SPA1-RELATED 3 (845 aa).

Positions Met1 to Asp19 are enriched in polar residues. Disordered regions lie at residues Met1 to Arg33 and Cys139 to Gly158. Residues Met1–Ile297 form the Protein kinase domain. Residues Arg301–Leu329 adopt a coiled-coil conformation. 7 WD repeats span residues Asn532–Arg571, Ala581–Glu621, Glu624–Thr664, Lys666–Cys706, Gly710–Asn748, Gly757–Ser796, and Asp812–Thr845. The DWD box signature appears at Ala685–Arg699.

As to quaternary structure, interacts with COP1 and CO.

It is found in the nucleus. In terms of biological role, repressor of photomorphogenesis in the light. Probably part of the COP1/SPA E3 ubiquitin-protein ligase complex. In Arabidopsis thaliana (Mouse-ear cress), this protein is Protein SPA1-RELATED 3 (SPA3).